A 424-amino-acid polypeptide reads, in one-letter code: Phosphomethylpyrimidine synthase (424 aa).

Substrate contacts are provided by residues methionine 94, tyrosine 123, histidine 162, 184-186, 225-228, and glutamate 264; these read SRG and NGMR. Histidine 268 contacts Zn(2+). Tyrosine 291 serves as a coordination point for substrate. Zn(2+) is bound at residue histidine 332. [4Fe-4S] cluster is bound by residues cysteine 406, cysteine 409, and cysteine 413.

Belongs to the ThiC family. The cofactor is [4Fe-4S] cluster.

The catalysed reaction is 5-amino-1-(5-phospho-beta-D-ribosyl)imidazole + S-adenosyl-L-methionine = 4-amino-2-methyl-5-(phosphooxymethyl)pyrimidine + CO + 5'-deoxyadenosine + formate + L-methionine + 3 H(+). It participates in cofactor biosynthesis; thiamine diphosphate biosynthesis. Functionally, catalyzes the synthesis of the hydroxymethylpyrimidine phosphate (HMP-P) moiety of thiamine from aminoimidazole ribotide (AIR) in a radical S-adenosyl-L-methionine (SAM)-dependent reaction. This Methanoculleus marisnigri (strain ATCC 35101 / DSM 1498 / JR1) protein is Phosphomethylpyrimidine synthase.